The sequence spans 293 residues: MSDWKSMSKDELELQYSPSRWSPRMSADDVIRAHVSALKSGTERARSVTQTLMDVPYGEAEGEKLDVYLPSSSSPDVPLVIYFHGGYWQFLSKDESGFLAVPLVQKGAVVVAVGYSIAPKGDMDLMVSQVRRSVVSVIQQYSHISGLYLCGHSAGAHLAAMVLSTDWTQYDVSPKIKGAFLVSGIYDLQPILSTYVNEPLKMTEEVALRNSPSRFLSQLKVSSASCDITVAVAQNDSPEFRKQSEEYYKALESAGLKVSFEDVSETDHFSIIEQLVDENYLLTKLLLKMIGKS.

The HGGXW signature appears at 84 to 88 (HGGYW). Ser153 functions as the Nucleophile in the catalytic mechanism. Residues Asp236 and His268 contribute to the active site.

Belongs to the kynurenine formamidase family. In terms of assembly, homodimer.

The protein localises to the cytoplasm. It localises to the cytosol. The protein resides in the nucleus. The enzyme catalyses N-formyl-L-kynurenine + H2O = L-kynurenine + formate + H(+). It functions in the pathway amino-acid degradation; L-tryptophan degradation via kynurenine pathway; L-kynurenine from L-tryptophan: step 2/2. Its function is as follows. Catalyzes the hydrolysis of N-formyl-L-kynurenine to L-kynurenine, the second step in the kynurenine pathway of tryptophan degradation. Kynurenine may be further oxidized to nicotinic acid, NAD(H) and NADP(H). Required for elimination of toxic metabolites. The sequence is that of Kynurenine formamidase (afmid) from Danio rerio (Zebrafish).